The chain runs to 474 residues: Gamma-aminobutyric acid receptor subunit beta-1 (474 aa).

Positions 1–25 are cleaved as a signal peptide; sequence MWTVQNRESLGLLSFPVMITMVCCA. Residues 26 to 245 lie on the Extracellular side of the membrane; sequence HSTNEPSNMS…SFRLKRNIGY (220 aa). The N-linked (GlcNAc...) asparagine glycan is linked to Asn-105. Tyr-122 lines the histamine pocket. Cys-161 and Cys-175 form a disulfide bridge. Asn-174 carries an N-linked (GlcNAc...) asparagine glycan. Residues 181-182 and Thr-227 contribute to the histamine site; that span reads SY. Residues Tyr-182 and Thr-227 each contribute to the 4-aminobutanoate site. 3 helical membrane passes run 246-267, 271-293, and 305-327; these read FILQ…SFWI, ASAA…STHL, and AIDI…YAFV. At 328–451 the chain is on the cytoplasmic side; the sequence is NYIFFGKGPQ…DLTDVNSIDK (124 aa). A helical membrane pass occupies residues 452–473; that stretch reads WSRMFFPITFSLFNVVYWLYYV.

It belongs to the ligand-gated ion channel (TC 1.A.9) family. Gamma-aminobutyric acid receptor (TC 1.A.9.5) subfamily. GABRB1 sub-subfamily. Heteropentamer, formed by a combination of alpha (GABRA1-6), beta (GABRB1-3), gamma (GABRG1-3), delta (GABRD), epsilon (GABRE), rho (GABRR1-3), pi (GABRP) and theta (GABRQ) chains, each subunit exhibiting distinct physiological and pharmacological properties. Binds UBQLN1.

The protein localises to the postsynaptic cell membrane. The protein resides in the cell membrane. The catalysed reaction is chloride(in) = chloride(out). With respect to regulation, potentiated by etomidate, propofol, pregnanolone and flurazepam. Potentiated by histamine. Beta subunit of the heteropentameric ligand-gated chloride channel gated by gamma-aminobutyric acid (GABA), a major inhibitory neurotransmitter in the brain. GABA-gated chloride channels, also named GABA(A) receptors (GABAAR), consist of five subunits arranged around a central pore and contain one or two GABA active binding sites located at the alpha and beta subunit interfaces, depending on subunit composition. When activated by GABA, GABAARs selectively allow the flow of chloride anions across the cell membrane down their electrochemical gradient. Chloride influx into the postsynaptic neuron following GABAAR opening decreases the neuron ability to generate a new action potential, thereby reducing nerve transmission. Beta-containing GABAARs can simultaneously bind GABA and histamine where histamine binds at the interface of two neighboring beta subunits, which may be involved in the regulation of sleep and wakefulness. In Homo sapiens (Human), this protein is Gamma-aminobutyric acid receptor subunit beta-1.